The sequence spans 85 residues: Translation initiation factor IF-1 2 (85 aa).

An S1-like domain is found at 1 to 72 (MAKEELIEMQ…TKGRITFRHL (72 aa)).

Belongs to the IF-1 family. Component of the 30S ribosomal translation pre-initiation complex which assembles on the 30S ribosome in the order IF-2 and IF-3, IF-1 and N-formylmethionyl-tRNA(fMet); mRNA recruitment can occur at any time during PIC assembly.

Its subcellular location is the cytoplasm. In terms of biological role, one of the essential components for the initiation of protein synthesis. Stabilizes the binding of IF-2 and IF-3 on the 30S subunit to which N-formylmethionyl-tRNA(fMet) subsequently binds. Helps modulate mRNA selection, yielding the 30S pre-initiation complex (PIC). Upon addition of the 50S ribosomal subunit IF-1, IF-2 and IF-3 are released leaving the mature 70S translation initiation complex. In Paracidovorax citrulli (strain AAC00-1) (Acidovorax citrulli), this protein is Translation initiation factor IF-1 2.